The following is a 167-amino-acid chain: NADH-quinone oxidoreductase subunit B 2 (167 aa).

[4Fe-4S] cluster contacts are provided by Cys-38, Cys-39, Cys-103, and Cys-132.

The protein belongs to the complex I 20 kDa subunit family. NDH-1 is composed of 14 different subunits. Subunits NuoB, C, D, E, F, and G constitute the peripheral sector of the complex. [4Fe-4S] cluster serves as cofactor.

It is found in the cell inner membrane. It catalyses the reaction a quinone + NADH + 5 H(+)(in) = a quinol + NAD(+) + 4 H(+)(out). Its function is as follows. NDH-1 shuttles electrons from NADH, via FMN and iron-sulfur (Fe-S) centers, to quinones in the respiratory chain. The immediate electron acceptor for the enzyme in this species is believed to be ubiquinone. Couples the redox reaction to proton translocation (for every two electrons transferred, four hydrogen ions are translocated across the cytoplasmic membrane), and thus conserves the redox energy in a proton gradient. This chain is NADH-quinone oxidoreductase subunit B 2, found in Rhizobium meliloti (strain 1021) (Ensifer meliloti).